We begin with the raw amino-acid sequence, 316 residues long: Acetylglutamate kinase (316 aa).

Residues Gly-65–Gly-66, Arg-87, and Asn-179 contribute to the substrate site.

This sequence belongs to the acetylglutamate kinase family. ArgB subfamily.

It localises to the cytoplasm. The enzyme catalyses N-acetyl-L-glutamate + ATP = N-acetyl-L-glutamyl 5-phosphate + ADP. The protein operates within amino-acid biosynthesis; L-arginine biosynthesis; N(2)-acetyl-L-ornithine from L-glutamate: step 2/4. Catalyzes the ATP-dependent phosphorylation of N-acetyl-L-glutamate. The protein is Acetylglutamate kinase of Alkaliphilus metalliredigens (strain QYMF).